Reading from the N-terminus, the 108-residue chain is UPF0060 membrane protein BH2744 (108 aa).

A run of 4 helical transmembrane segments spans residues T6 to L26, P31 to F51, V60 to D80, and T86 to P106.

It belongs to the UPF0060 family.

It localises to the cell membrane. In Halalkalibacterium halodurans (strain ATCC BAA-125 / DSM 18197 / FERM 7344 / JCM 9153 / C-125) (Bacillus halodurans), this protein is UPF0060 membrane protein BH2744.